A 325-amino-acid chain; its full sequence is Tagatose 1,6-diphosphate aldolase (325 aa).

The protein belongs to the aldolase LacD family.

The enzyme catalyses D-tagatofuranose 1,6-bisphosphate = D-glyceraldehyde 3-phosphate + dihydroxyacetone phosphate. It participates in carbohydrate metabolism; D-tagatose 6-phosphate degradation; D-glyceraldehyde 3-phosphate and glycerone phosphate from D-tagatose 6-phosphate: step 2/2. The protein is Tagatose 1,6-diphosphate aldolase of Staphylococcus epidermidis (strain ATCC 12228 / FDA PCI 1200).